Consider the following 157-residue polypeptide: Transcription elongation factor GreA (157 aa).

The stretch at 47–75 (ENAEYDAAREKQGQIEDRITELENILSNA) forms a coiled coil.

The protein belongs to the GreA/GreB family.

Functionally, necessary for efficient RNA polymerase transcription elongation past template-encoded arresting sites. The arresting sites in DNA have the property of trapping a certain fraction of elongating RNA polymerases that pass through, resulting in locked ternary complexes. Cleavage of the nascent transcript by cleavage factors such as GreA or GreB allows the resumption of elongation from the new 3'terminus. GreA releases sequences of 2 to 3 nucleotides. This Mycoplasmopsis pulmonis (strain UAB CTIP) (Mycoplasma pulmonis) protein is Transcription elongation factor GreA.